The primary structure comprises 500 residues: Intermediate filament protein ifc-1 (500 aa).

Positions 1-36 (MSLYGGIPTNLVSGMSSAGAICTTQIRDAREREKRE) are head. The 351-residue stretch at 33–383 (EKREIGLLND…VLLNGANVTT (351 aa)) folds into the IF rod domain. The coil 1A stretch occupies residues 37 to 68 (IGLLNDRLADYIEKVRFLKAQNHVLSHDIEIL). The linker 1 stretch occupies residues 69–81 (RRGFSGGGHISSF). Residues 82–219 (FESEISNCTV…TENSSRIEQE (138 aa)) form a coil 1B region. A linker 12 region spans residues 220–237 (LIYIHRDTTLENRDYFRQ). The tract at residues 238-383 (ELQAAMRDIR…VLLNGANVTT (146 aa)) is coil 2. Positions 384–496 (YVSNSTGAAG…RHHESSYSYS (113 aa)) are tail.

It belongs to the intermediate filament family.

The protein resides in the cytoplasm. Functionally, cytoplasmic intermediate filaments provide mechanical strength to cells. Not essential protein. The sequence is that of Intermediate filament protein ifc-1 (ifc-1) from Caenorhabditis elegans.